The following is a 257-amino-acid chain: Imidazole glycerol phosphate synthase subunit HisF (257 aa).

Catalysis depends on residues Asp11 and Asp130.

It belongs to the HisA/HisF family. Heterodimer of HisH and HisF.

It is found in the cytoplasm. It carries out the reaction 5-[(5-phospho-1-deoxy-D-ribulos-1-ylimino)methylamino]-1-(5-phospho-beta-D-ribosyl)imidazole-4-carboxamide + L-glutamine = D-erythro-1-(imidazol-4-yl)glycerol 3-phosphate + 5-amino-1-(5-phospho-beta-D-ribosyl)imidazole-4-carboxamide + L-glutamate + H(+). The protein operates within amino-acid biosynthesis; L-histidine biosynthesis; L-histidine from 5-phospho-alpha-D-ribose 1-diphosphate: step 5/9. Functionally, IGPS catalyzes the conversion of PRFAR and glutamine to IGP, AICAR and glutamate. The HisF subunit catalyzes the cyclization activity that produces IGP and AICAR from PRFAR using the ammonia provided by the HisH subunit. The polypeptide is Imidazole glycerol phosphate synthase subunit HisF (Actinobacillus succinogenes (strain ATCC 55618 / DSM 22257 / CCUG 43843 / 130Z)).